A 159-amino-acid polypeptide reads, in one-letter code: Protein US8.5 (159 aa).

The interval 27 to 107 is disordered; it reads SSQPLDPEGP…APSPHPRPPG (81 aa). A compositionally biased stretch (basic and acidic residues) spans 80 to 91; that stretch reads SDERGPPRHDRP.

Belongs to the HHV-1 US8.5 protein family. In terms of processing, phosphorylated.

The protein resides in the host nucleus. It localises to the host nucleolus. The sequence is that of Protein US8.5 from Human herpesvirus 1 (strain 17) (HHV-1).